Consider the following 423-residue polypeptide: Oligopeptide transport ATP-binding protein OppD (423 aa).

An ABC transporter domain is found at 24–309; it reads IRDLHVSFKV…PVHPYTWALM (286 aa). 58–65 serves as a coordination point for ATP; it reads GESGSGKS. Residues 398–423 form a disordered region; the sequence is AIKMPSQPVKQPKSNGNKKTKTKSAR. The span at 413 to 423 shows a compositional bias: basic residues; the sequence is GNKKTKTKSAR.

This sequence belongs to the ABC transporter superfamily. The complex is composed of two ATP-binding proteins (OppD and OppF), two transmembrane proteins (OppB and OppC) and a solute-binding protein (OppA).

It localises to the cell membrane. The catalysed reaction is a [peptide](out) + ATP + H2O = a [peptide](in) + ADP + phosphate + H(+). Part of the ABC transporter complex OppABCDF involved in the uptake of oligopeptides. Probably responsible for energy coupling to the transport system. The chain is Oligopeptide transport ATP-binding protein OppD (oppD) from Mycoplasma pneumoniae (strain ATCC 29342 / M129 / Subtype 1) (Mycoplasmoides pneumoniae).